The primary structure comprises 118 residues: Large ribosomal subunit protein uL18 (118 aa).

This sequence belongs to the universal ribosomal protein uL18 family. As to quaternary structure, part of the 50S ribosomal subunit; part of the 5S rRNA/L5/L18/L25 subcomplex. Contacts the 5S and 23S rRNAs.

This is one of the proteins that bind and probably mediate the attachment of the 5S RNA into the large ribosomal subunit, where it forms part of the central protuberance. The protein is Large ribosomal subunit protein uL18 of Ralstonia pickettii (strain 12J).